Reading from the N-terminus, the 113-residue chain is Ribonuclease P protein component (113 aa).

Over residues 1–10 (MLPTRHRMRT) the composition is skewed to basic residues. The disordered stretch occupies residues 1-23 (MLPTRHRMRTSAHFSTTVRSGAR).

Belongs to the RnpA family. Consists of a catalytic RNA component (M1 or rnpB) and a protein subunit.

The enzyme catalyses Endonucleolytic cleavage of RNA, removing 5'-extranucleotides from tRNA precursor.. Its function is as follows. RNaseP catalyzes the removal of the 5'-leader sequence from pre-tRNA to produce the mature 5'-terminus. It can also cleave other RNA substrates such as 4.5S RNA. The protein component plays an auxiliary but essential role in vivo by binding to the 5'-leader sequence and broadening the substrate specificity of the ribozyme. The polypeptide is Ribonuclease P protein component (Kocuria rhizophila (strain ATCC 9341 / DSM 348 / NBRC 103217 / DC2201)).